Reading from the N-terminus, the 434-residue chain is Eukaryotic peptide chain release factor subunit 1-2 (434 aa).

At Ala-2 the chain carries N-acetylalanine.

It belongs to the eukaryotic release factor 1 family. As to quaternary structure, heterodimer of two subunits, one of which binds GTP.

The protein resides in the cytoplasm. Functionally, directs the termination of nascent peptide synthesis (translation) in response to the termination codons UAA, UAG and UGA. Modulates plant growth and development. In Arabidopsis thaliana (Mouse-ear cress), this protein is Eukaryotic peptide chain release factor subunit 1-2.